The following is a 589-amino-acid chain: ATP-dependent lipid A-core flippase (589 aa).

A run of 5 helical transmembrane segments spans residues 29–49 (LLLV…TGFL), 70–90 (WLPV…YITD), 157–177 (VIGA…TILV), 261–281 (MIGA…ALAG), and 283–303 (LTAG…PGLK). An ABC transmembrane type-1 domain is found at 32 to 314 (VAALIAALIE…LTNVQNMVQR (283 aa)). Residues 346–582 (IEFRDVTARY…GGLYSHLHGM (237 aa)) enclose the ABC transporter domain. 380–387 (GRSGSGKS) contacts ATP.

It belongs to the ABC transporter superfamily. Lipid exporter (TC 3.A.1.106) family. Homodimer.

The protein resides in the cell inner membrane. It carries out the reaction ATP + H2O + lipid A-core oligosaccharideSide 1 = ADP + phosphate + lipid A-core oligosaccharideSide 2.. Functionally, involved in lipopolysaccharide (LPS) biosynthesis. Translocates lipid A-core from the inner to the outer leaflet of the inner membrane. Transmembrane domains (TMD) form a pore in the inner membrane and the ATP-binding domain (NBD) is responsible for energy generation. This is ATP-dependent lipid A-core flippase from Xanthomonas euvesicatoria pv. vesicatoria (strain 85-10) (Xanthomonas campestris pv. vesicatoria).